Here is a 332-residue protein sequence, read N- to C-terminus: Holliday junction branch migration complex subunit RuvB (332 aa).

The tract at residues 1–181 (MTRFLDSDAM…FGITGHMEYY (181 aa)) is large ATPase domain (RuvB-L). Residues Leu20, Arg21, Gly62, Lys65, Thr66, Thr67, 128–130 (EDF), Arg171, Tyr181, and Arg218 each bind ATP. Thr66 contacts Mg(2+). The interval 182 to 252 (EENDLTEIIE…ITDKALTMLD (71 aa)) is small ATPAse domain (RuvB-S). Residues 255-332 (HEGLDYVDQK…EHLGYQRFDK (78 aa)) are head domain (RuvB-H). Residues Arg291, Arg310, Arg312, and Arg315 each contribute to the DNA site.

Belongs to the RuvB family. Homohexamer. Forms an RuvA(8)-RuvB(12)-Holliday junction (HJ) complex. HJ DNA is sandwiched between 2 RuvA tetramers; dsDNA enters through RuvA and exits via RuvB. An RuvB hexamer assembles on each DNA strand where it exits the tetramer. Each RuvB hexamer is contacted by two RuvA subunits (via domain III) on 2 adjacent RuvB subunits; this complex drives branch migration. In the full resolvosome a probable DNA-RuvA(4)-RuvB(12)-RuvC(2) complex forms which resolves the HJ.

It is found in the cytoplasm. The enzyme catalyses ATP + H2O = ADP + phosphate + H(+). Functionally, the RuvA-RuvB-RuvC complex processes Holliday junction (HJ) DNA during genetic recombination and DNA repair, while the RuvA-RuvB complex plays an important role in the rescue of blocked DNA replication forks via replication fork reversal (RFR). RuvA specifically binds to HJ cruciform DNA, conferring on it an open structure. The RuvB hexamer acts as an ATP-dependent pump, pulling dsDNA into and through the RuvAB complex. RuvB forms 2 homohexamers on either side of HJ DNA bound by 1 or 2 RuvA tetramers; 4 subunits per hexamer contact DNA at a time. Coordinated motions by a converter formed by DNA-disengaged RuvB subunits stimulates ATP hydrolysis and nucleotide exchange. Immobilization of the converter enables RuvB to convert the ATP-contained energy into a lever motion, pulling 2 nucleotides of DNA out of the RuvA tetramer per ATP hydrolyzed, thus driving DNA branch migration. The RuvB motors rotate together with the DNA substrate, which together with the progressing nucleotide cycle form the mechanistic basis for DNA recombination by continuous HJ branch migration. Branch migration allows RuvC to scan DNA until it finds its consensus sequence, where it cleaves and resolves cruciform DNA. This chain is Holliday junction branch migration complex subunit RuvB, found in Streptococcus agalactiae serotype V (strain ATCC BAA-611 / 2603 V/R).